We begin with the raw amino-acid sequence, 354 residues long: UPF0283 membrane protein CGSHiGG_02710 (354 aa).

3 consecutive transmembrane segments (helical) span residues Leu57–Ile77, Ile87–Ile107, and Glu211–Trp231.

The protein belongs to the UPF0283 family.

It is found in the cell inner membrane. The protein is UPF0283 membrane protein CGSHiGG_02710 of Haemophilus influenzae (strain PittGG).